A 140-amino-acid chain; its full sequence is Hexon-interlacing protein (140 aa).

Residues 100–127 (LTALLAQLDSLTRELNVVSQQLLDLRQQ) are a coiled coil. The residue at position 135 (serine 135) is a Phosphoserine; by host.

It belongs to the adenoviridae hexon-interlacing protein family. As to quaternary structure, homotrimer. Interacts with hexon protein; this interaction tethers the hexons together. Self-interacts with adjacent proteins. Interacts with kinesin light chain KLC1; this interaction leads to capsid disruption at the nuclear pore complex during virus entry into host cell.

It localises to the virion. It is found in the host nucleus. Functionally, structural component of the virion that forms triskelion structures consisting of three molecules that stabilize three hexon trimers at the center of each icosahedral facet and fixes the peripentonal hexons. Dispensable for assembly. During virus entry, recruits the anterograde motor kinesin-1 to the capsid docked at the nuclear pore complex thereby subjecting the docked capsid to a pulling force. The resulting tension leads to capsid disruption, dispersion of capsid fragments toward cell periphery and eventually viral DNA entry into the host nucleus. The polypeptide is Hexon-interlacing protein (Human adenovirus C serotype 2 (HAdV-2)).